The chain runs to 104 residues: Large ribosomal subunit protein bL21 (104 aa).

Positions 81–90 (QGYRRHHGHR) are enriched in basic residues. The disordered stretch occupies residues 81 to 104 (QGYRRHHGHRQPYTQVKITGISAG).

Belongs to the bacterial ribosomal protein bL21 family. In terms of assembly, part of the 50S ribosomal subunit. Contacts protein L20.

Functionally, this protein binds to 23S rRNA in the presence of protein L20. In Halorhodospira halophila (strain DSM 244 / SL1) (Ectothiorhodospira halophila (strain DSM 244 / SL1)), this protein is Large ribosomal subunit protein bL21.